A 374-amino-acid chain; its full sequence is Very late expression factor 1 (374 aa).

Positions 169-349 (AIDTILNFID…NFDESSSDEE (181 aa)) constitute a Tyr recombinase domain. Active-site residues include R210, K239, R303, and H326. The interval 328–374 (SPASTKPYLNKYNFDESSSDEESGGNNRDSSTGSSANSSSLYYQTGD) is disordered. The active-site O-(3'-phospho-DNA)-tyrosine intermediate is the Y335. A compositionally biased stretch (low complexity) spans 357–367 (SSTGSSANSSS).

It belongs to the 'phage' integrase family.

Functionally, involved in very late gene activation. This chain is Very late expression factor 1 (VLF-1), found in Orgyia pseudotsugata (Douglas-fir tussock moth).